The sequence spans 170 residues: Fimbrial protein (170 aa).

Positions 1-7 (MNTLQKG) are cleaved as a propeptide — leader sequence. At phenylalanine 8 the chain carries N-methylphenylalanine. A helical membrane pass occupies residues 8–28 (FTLIELMIVIAIVGILAAVAL). O-linked (Gal...) serine glycosylation is present at serine 70. Serine 100 bears the O-(sn-1-glycerophosphoryl)serine mark. A disulfide bridge links cysteine 127 with cysteine 163.

Belongs to the N-Me-Phe pilin family. As to quaternary structure, the pili are polar flexible filaments of about 5.4 nanometers diameter and 2.5 micrometers average length; they consist of only a single polypeptide chain arranged in a helical configuration of five subunits per turn in the assembled pilus. Post-translationally, O-linked glycan has been reported to consist either of the Gal(alpha1-3) GlcNAc disaccharide, or the Gal(beta 1-4) Gal(alpha 1-3) 2,4-diacetamido-2,4,6-trideoxyhexose trisaccharide.

It is found in the fimbrium. It localises to the membrane. Major component of the type IV pilus (T4P) that plays a role in cellular adherence, microcolony formation as well as twitching motility. The sequence is that of Fimbrial protein (pilE) from Neisseria meningitidis serogroup B (strain ATCC BAA-335 / MC58).